Here is a 450-residue protein sequence, read N- to C-terminus: tRNA modification GTPase MnmE (450 aa).

Residues Arg25, Glu86, and Arg126 each contribute to the (6S)-5-formyl-5,6,7,8-tetrahydrofolate site. The TrmE-type G domain maps to 221–373; that stretch reads GLRVALVGRP…LVQALLERCG (153 aa). Asn231 lines the K(+) pocket. Residues 231 to 236, 250 to 256, 275 to 278, and 336 to 339 contribute to the GTP site; these read NVGKSS, TDLPGTT, DTAG, and NKAD. Ser235 provides a ligand contact to Mg(2+). K(+)-binding residues include Thr250, Leu252, and Thr255. A Mg(2+)-binding site is contributed by Thr256. Lys450 is a (6S)-5-formyl-5,6,7,8-tetrahydrofolate binding site.

Belongs to the TRAFAC class TrmE-Era-EngA-EngB-Septin-like GTPase superfamily. TrmE GTPase family. As to quaternary structure, homodimer. Heterotetramer of two MnmE and two MnmG subunits. Requires K(+) as cofactor.

It localises to the cytoplasm. Functionally, exhibits a very high intrinsic GTPase hydrolysis rate. Involved in the addition of a carboxymethylaminomethyl (cmnm) group at the wobble position (U34) of certain tRNAs, forming tRNA-cmnm(5)s(2)U34. The chain is tRNA modification GTPase MnmE from Synechococcus sp. (strain CC9605).